Here is a 910-residue protein sequence, read N- to C-terminus: Importin subunit beta-2 (910 aa).

HEAT repeat units lie at residues 12 to 39 (VLVE…NLLE), 44 to 82 (IPDL…VSSL), 93 to 126 (YTKS…RWGI), 132 to 169 (VLPQ…LDRD), 177 to 207 (DFMI…QFVL), 220 to 247 (FLET…VYLL), 259 to 286 (GSIV…FWLA), 302 to 406 (DKIV…LSSF), 414 to 442 (IILP…GAIA), 454 to 481 (PELY…TLGR), 499 to 532 (FVPL…EEQA), 540 to 573 (LEPI…ADYV), 581 to 619 (RYIE…VALR), 627 to 677 (AETY…ALGS), 690 to 721 (LGQI…MYCF), 729 to 764 (DALL…LQLG), 772 to 807 (KPLL…VYNP), 815 to 848 (ELFY…LACN), and 857 to 888 (PMFV…VELF). The region spanning 34–122 (ALNLLEKAKD…SGNVITTIIS (89 aa)) is the Importin N-terminal domain. The segment at 333–381 (DREEDIRPQHAKGKSRITLNTQGPITQQGSSNADADELEDEDEDDDEFD) is disordered. Over residues 349-364 (ITLNTQGPITQQGSSN) the composition is skewed to polar residues. The segment covering 366–381 (DADELEDEDEDDDEFD) has biased composition (acidic residues).

The protein belongs to the importin beta family. Importin beta-2 subfamily. Interacts with Ran; interacts specifically with the GTP-bound form of Ran (GTP-Ran), protecting it from GTP hydrolysis and nucleotide exchange. Interacts with nucleoporins.

The protein localises to the cytoplasm. It localises to the nucleus envelope. Functions in nuclear protein import as nuclear transport receptor. Serves as receptor for arginine/glycine-rich nuclear localization signals (rg-NLS) and PY-NLS in cargo substrates. Its predominant cargo substrate seems to be mRNA-binding proteins. Mediates docking of the importin/substrate complex to the nuclear pore complex (NPC) through binding to repeat-containing nucleoporins. The complex is subsequently translocated through the pore by an energy requiring, Ran-dependent mechanism. At the nucleoplasmic side of the NPC, GTP-Ran binding leads to release of the cargo. The importin is re-exported from the nucleus to the cytoplasm where GTP hydrolysis releases Ran from importin. The directionality of nuclear import is thought to be conferred by an asymmetric distribution of the GTP- and GDP-bound forms of Ran between the cytoplasm and nucleus. The sequence is that of Importin subunit beta-2 from Schizosaccharomyces pombe (strain 972 / ATCC 24843) (Fission yeast).